The chain runs to 287 residues: 4-hydroxybenzoate octaprenyltransferase (287 aa).

8 helical membrane-spanning segments follow: residues 23 to 43, 46 to 66, 99 to 119, 141 to 161, 162 to 182, 213 to 233, 237 to 257, and 266 to 286; these read IGSLLLLWPTYWALWLAGGTA, GKLLLVFTCGVFFMRAAGCVI, LFVLLVGLSFALVLTLNAMTI, LPQVILGMAFGWSIPMAYAAV, GESLPLSCWLLFAANICWTVA, LVIGLLQLATLLLLLWVGDLN, GAYYWGVLLAAVLFVYQQQLI, and FRAFMNNNYVGLILFLGILLA.

The protein belongs to the UbiA prenyltransferase family. It depends on Mg(2+) as a cofactor.

Its subcellular location is the cell inner membrane. It carries out the reaction all-trans-octaprenyl diphosphate + 4-hydroxybenzoate = 4-hydroxy-3-(all-trans-octaprenyl)benzoate + diphosphate. It functions in the pathway cofactor biosynthesis; ubiquinone biosynthesis. Functionally, catalyzes the prenylation of para-hydroxybenzoate (PHB) with an all-trans polyprenyl group. Mediates the second step in the final reaction sequence of ubiquinone-8 (UQ-8) biosynthesis, which is the condensation of the polyisoprenoid side chain with PHB, generating the first membrane-bound Q intermediate 3-octaprenyl-4-hydroxybenzoate. The sequence is that of 4-hydroxybenzoate octaprenyltransferase from Edwardsiella ictaluri (strain 93-146).